A 430-amino-acid chain; its full sequence is Mothers against decapentaplegic homolog 9 (430 aa).

In terms of domain architecture, MH1 spans 16 to 140; that stretch reads PAVKRLLGWK…YRRVETPVLP (125 aa). Zn(2+) contacts are provided by C68, C113, C125, and H130. The interval 186 to 222 is disordered; that stretch reads CPAPPSSPGHVFPQSPCPTSYPHSPGSPSESDSPYQH. Residues 202–221 are compositionally biased toward polar residues; it reads CPTSYPHSPGSPSESDSPYQ. The MH2 domain maps to 236–430; the sequence is WCSVAYYELN…SPHNPISSVS (195 aa).

It belongs to the dwarfin/SMAD family. Interaction with the co-SMAD SMAD4. Interacts with PEBP2-alpha subunit. Interacts with RANBP3L. Post-translationally, phosphorylated on serine by BMP (bone morphogenetic proteins) type 1 receptor kinase and activin type I receptor-like kinases (ALK-2, ALK-3 and ALK-6).

It localises to the cytoplasm. The protein localises to the nucleus. Functionally, transcriptional modulator activated by BMP (bone morphogenetic proteins) type 1 receptor kinase. SMAD9 is a receptor-regulated SMAD (R-SMAD). Has been shown to be activated by activin type I receptor-like kinases (ALK-2, ALK-3, ALK-6) which stimulate heteromerization between SMAD9 and SMAD4. May play a role in osteoblast differentiation and maturation. In Mus musculus (Mouse), this protein is Mothers against decapentaplegic homolog 9 (Smad9).